The primary structure comprises 89 residues: Small ribosomal subunit protein uS15 (89 aa).

The segment covering 1–21 (MAITQERKNQLINEFKTHESD) has biased composition (basic and acidic residues). Residues 1–24 (MAITQERKNQLINEFKTHESDTGS) are disordered.

Belongs to the universal ribosomal protein uS15 family. In terms of assembly, part of the 30S ribosomal subunit. Forms a bridge to the 50S subunit in the 70S ribosome, contacting the 23S rRNA.

One of the primary rRNA binding proteins, it binds directly to 16S rRNA where it helps nucleate assembly of the platform of the 30S subunit by binding and bridging several RNA helices of the 16S rRNA. Functionally, forms an intersubunit bridge (bridge B4) with the 23S rRNA of the 50S subunit in the ribosome. The chain is Small ribosomal subunit protein uS15 from Bacillus subtilis (strain 168).